The primary structure comprises 974 residues: Receptor-like protein 7 (974 aa).

Residues 1 to 24 (MSFLIRSICFLILIPSFLITFVSA) form the signal peptide. Residues 25–930 (TQHLCHSDQK…EEEEEESFSW (906 aa)) are Extracellular-facing. Asn54 and Asn90 each carry an N-linked (GlcNAc...) asparagine glycan. LRR repeat units lie at residues 96 to 120 (LRHL…EFDK), 122 to 145 (TGLE…LLQL), 147 to 166 (KLVS…SFHY), 181 to 204 (LRNL…EFSN), 206 to 229 (RSLR…ILLI), and 230 to 252 (PNLQ…VFHE). The N-linked (GlcNAc...) asparagine glycan is linked to Asn253. 5 LRR repeats span residues 254 to 277 (NSLL…ISSL), 278 to 301 (KNLT…LGNL), 302 to 325 (SHLS…IGNL), 327 to 349 (QLTN…LSNL), and 350 to 373 (TKLN…ISQL). 2 N-linked (GlcNAc...) asparagine glycosylation sites follow: Asn279 and Asn300. A glycan (N-linked (GlcNAc...) asparagine) is linked at Asn348. The stretch at 374–396 (SKLKFFFADDNPFIGAILSPLLK) is one LRR 12; degenerate repeat. LRR repeat units lie at residues 397-422 (IPSL…IFML), 425-448 (LETF…VFSS), 454-472 (TLYI…SDFP), 473-495 (SNLE…IRKG), 496-519 (RNLQ…LWRM), 521-542 (TLNS…VKAS), 544-570 (ESQL…SLRY), 572-589 (SGSN…ICGL), 590-616 (SSLE…LMSS), 618-638 (SDLD…FMNA), 639-662 (TKLR…LTGC), 664-685 (SLEV…ELNS), 687-712 (QKLQ…VWFG), 713-737 (FPQL…YFMN), 785-809 (LTIY…IGLL), 810-833 (KELR…LANL), 834-857 (KNLE…LGTL), and 859-882 (SLAW…QFQR). N-linked (GlcNAc...) asparagine glycosylation is found at Asn434, Asn466, and Asn484. An N-linked (GlcNAc...) asparagine glycan is attached at Asn529. 4 N-linked (GlcNAc...) asparagine glycosylation sites follow: Asn577, Asn603, Asn624, and Asn637. A glycan (N-linked (GlcNAc...) asparagine) is linked at Asn737. Residues Asn816, Asn845, and Asn864 are each glycosylated (N-linked (GlcNAc...) asparagine). The disordered stretch occupies residues 899–923 (LENVCGHIKESTPTQTEPLETKEEE). The chain crosses the membrane as a helical span at residues 931–951 (IAAGLGFAPGVVFGLAMGYIV). Topologically, residues 952-974 (VSYKHQWFMKTFGRSKQQNTRTR) are cytoplasmic.

This sequence belongs to the RLP family.

The protein localises to the cell membrane. This is Receptor-like protein 7 from Arabidopsis thaliana (Mouse-ear cress).